Here is a 203-residue protein sequence, read N- to C-terminus: MFHNTFQSGLLSVLYSIGSKPLQIWDTQIKNGHVKRITDEEIQSLVLEIMGNNISTAFISCPVDPEKTLGIKLPFFVMVVKNMNKYFSFEVQIIDDKKIKRRFRASNYQSATRVKPFICTMPMRMDEGWNQIQFNLSDFVKRAYGTNYVETLRIQIHANCRIRRVYFADRLYTEDELPAEFKLYLPIRGQLSTQSPAFAMTSE.

The protein belongs to the CFAP20 family.

It is found in the nucleus. The protein localises to the cytoplasm. It localises to the cytoskeleton. Its subcellular location is the microtubule organizing center. The protein resides in the centrosome. It is found in the centriole. The protein localises to the cilium basal body. It localises to the cilium axoneme. Functionally, cilium- and flagellum-specific protein that plays a role in axonemal structure organization and motility. Microtubule inner protein (MIP) part of the dynein-decorated doublet microtubules (DMTs) in cilia axoneme, which is required for motile cilia beating. Involved in the regulation of the size and morphology of cilia. Required for axonemal microtubules polyglutamylation. The chain is Cilia- and flagella-associated protein 20 from Caenorhabditis briggsae.